The chain runs to 161 residues: MKHLPKHLRPRWRYLAVGIETWPNASFGRRAFQREVWYAAQNLLGDTGSAETDMTVLQFHDYDGTAEAIVRTRRGQTNPARAALTCLDSVDDDDVRVRVRGISGTVRACEEKYIRGPPEFTEQRHVVFENADRSATVRPPRYDVETASDGAFVGATALDFR.

The protein belongs to the eukaryotic/archaeal RNase P protein component 2 family. Consists of a catalytic RNA component and at least 4-5 protein subunits.

It localises to the cytoplasm. It carries out the reaction Endonucleolytic cleavage of RNA, removing 5'-extranucleotides from tRNA precursor.. In terms of biological role, part of ribonuclease P, a protein complex that generates mature tRNA molecules by cleaving their 5'-ends. This Haloarcula marismortui (strain ATCC 43049 / DSM 3752 / JCM 8966 / VKM B-1809) (Halobacterium marismortui) protein is Ribonuclease P protein component 2.